Here is a 367-residue protein sequence, read N- to C-terminus: MSLADSVLAVNNDLPIRTDSPVHSGKVRSVYWLTDADSRRLIKTKGYNVPEDTPLAIMVISDRISAFDCIFHGEGGLKGIPGKGAALNAISNHWFKLFAENGLADSHILDIPHPFVWIVQKARPIKVEAICRQYITGSMWRAYSKGERVFCGITLPEGLEKDQKLPDLLITPSTKGILTGIPGVPAQDDINISRSDIEANYQAFGFEKLEDIDLYEKLLKDGFKVISKALADIDQVFVDTKFEFGYVTDKDGNSKLIYMDEVGTPDSSRIWDGAAYRDGKILENSKEGFRQFLLNHFPDPDVLLNKDRMPEREALARDNDLPLEAMMQVSRTYTGVAEKVTGAAIPLPANPKADIIKILREEYDLIL.

The protein belongs to the SAICAR synthetase family.

The catalysed reaction is 5-amino-1-(5-phospho-D-ribosyl)imidazole-4-carboxylate + L-aspartate + ATP = (2S)-2-[5-amino-1-(5-phospho-beta-D-ribosyl)imidazole-4-carboxamido]succinate + ADP + phosphate + 2 H(+). It participates in purine metabolism; IMP biosynthesis via de novo pathway; 5-amino-1-(5-phospho-D-ribosyl)imidazole-4-carboxamide from 5-amino-1-(5-phospho-D-ribosyl)imidazole-4-carboxylate: step 1/2. The protein is Phosphoribosylaminoimidazole-succinocarboxamide synthase of Shewanella sp. (strain W3-18-1).